Reading from the N-terminus, the 373-residue chain is AA9 family lytic polysaccharide monooxygenase A (373 aa).

The signal sequence occupies residues 1–20; that stretch reads MKSSTFGMLALAAAAKLVSA. His-21 is a binding site for Cu(2+). The interval 36–55 is disordered; it reads EGNSQSGYIRSPPSNSPITD. Cys-63 and Cys-183 form a disulfide bridge. His-102 lines the Cu(2+) pocket. The O2 site is built by His-169 and Gln-178. Residue Tyr-180 coordinates Cu(2+). Residues 234 to 333 form a disordered region; the sequence is GASGSSSSSS…NSVPQPSSNA (100 aa). Composition is skewed to low complexity over residues 235-262 and 270-323; these read ASGS…APSS and PATS…AAPT. A compositionally biased stretch (polar residues) spans 324–333; that stretch reads NSVPQPSSNA. Residues 335–371 enclose the CBM1 domain; the sequence is GAVKEWYQCGGLNYSGSTQCEEGLTCKKWNPYYHQCV. Asn-347 carries an N-linked (GlcNAc...) asparagine glycan.

The protein belongs to the polysaccharide monooxygenase AA9 family. The cofactor is Cu(2+).

It is found in the secreted. The catalysed reaction is [(1-&gt;4)-beta-D-glucosyl]n+m + reduced acceptor + O2 = 4-dehydro-beta-D-glucosyl-[(1-&gt;4)-beta-D-glucosyl]n-1 + [(1-&gt;4)-beta-D-glucosyl]m + acceptor + H2O.. In terms of biological role, lytic polysaccharide monooxygenase (LPMO) that depolymerizes crystalline and amorphous polysaccharides via the oxidation of scissile alpha- or beta-(1-4)-glycosidic bonds, yielding exclusively C4 oxidation products. Catalysis by LPMOs requires the reduction of the active-site copper from Cu(II) to Cu(I) by a reducing agent and H(2)O(2) or O(2) as a cosubstrate. In addition to cellulose, also cleaves the beta-(1!4)-glucan backbone of tamarind xyloglucan, but only next to unsubstituted glucosyl units. The sequence is that of AA9 family lytic polysaccharide monooxygenase A from Aspergillus tamarii.